We begin with the raw amino-acid sequence, 496 residues long: Aminoacetaldehyde dehydrogenase (496 aa).

Residues L166, W168, K192, S246, T249, and Y256 each contribute to the NADH site. Catalysis depends on E268, which acts as the Proton acceptor. NADH is bound at residue C269. C303 serves as the catalytic Nucleophile. Positions 353 and 398 each coordinate NADH.

Belongs to the aldehyde dehydrogenase family. Homotetramer, formed by two symmetrical dimers.

It carries out the reaction aminoacetaldehyde + NAD(+) + H2O = glycine + NADH + 2 H(+). It catalyses the reaction 3-aminopropanal + NAD(+) + H2O = beta-alanine + NADH + 2 H(+). Its function is as follows. NAD(+)-dependent aminoaldehyde dehydrogenase highly efficient with protonated aminoacetaldehyde (ACTAL) and 3-aminopropanaldehyde (APAL). Likely participates in a still uncharacterized metabolic pathway present in proteobacteria species, in which ACTAL might be an intermediate, yielding glycine. Highly prefers NAD(+) over NADP(+). Shows very poor activity with acetaldehyde, propanaldehyde, butanaldehyde, pentanaldehyde, dimethylaminoacetaldehyde, trimethylaminoacetaldehyde (betaine aldehyde), trimethylaminobutanaldehyde, short aliphatic hydroxyaldehydes such as 3-hydroxypropanaldehyde and 2-hydroxypropanaldehyde (lactaldehyde), and aromatic aldehydes. In Pseudomonas aeruginosa (strain ATCC 15692 / DSM 22644 / CIP 104116 / JCM 14847 / LMG 12228 / 1C / PRS 101 / PAO1), this protein is Aminoacetaldehyde dehydrogenase.